A 153-amino-acid polypeptide reads, in one-letter code: Troponin C (153 aa).

EF-hand domains are found at residues 9-44, 45-80, 85-120, and 121-153; these read EQVQMLRKAFDMFDRDKKGYIHTNMVSTILRTLGQT, FEENDLQQLIIEIDADGSGELEFDEFLTLTARFLVE, AMQEELREAFRMYDKEGNGYIPTSALREILRALDDK, and LTEDELDEMIAEIDTDGSGTVDFDEFMEMMTGD. Ca(2+)-binding residues include D58, D60, S62, E64, and E69. 5 residues coordinate Ca(2+): D134, D136, S138, T140, and E145.

The protein belongs to the troponin C family.

Troponin is the central regulatory protein of striated muscle contraction. Tn consists of three components: Tn-I which is the inhibitor of actomyosin ATPase, Tn-T which contains the binding site for tropomyosin and Tn-C. The binding of calcium to Tn-C abolishes the inhibitory action of Tn on actin filaments. This Tyrophagus putrescentiae (Mold mite) protein is Troponin C.